The primary structure comprises 385 residues: Succinate--CoA ligase [ADP-forming] subunit beta (385 aa).

The ATP-grasp domain maps to 9-240 (KEIFAKYGIP…ETQLPQLEVE (232 aa)). ATP is bound by residues K46, 53 to 55 (GRG), E98, T101, and E106. 2 residues coordinate Mg(2+): N195 and D209. Substrate is bound by residues N260 and 317-319 (GIL).

Belongs to the succinate/malate CoA ligase beta subunit family. As to quaternary structure, heterotetramer of two alpha and two beta subunits. It depends on Mg(2+) as a cofactor.

The enzyme catalyses succinate + ATP + CoA = succinyl-CoA + ADP + phosphate. It carries out the reaction GTP + succinate + CoA = succinyl-CoA + GDP + phosphate. It participates in carbohydrate metabolism; tricarboxylic acid cycle; succinate from succinyl-CoA (ligase route): step 1/1. In terms of biological role, succinyl-CoA synthetase functions in the citric acid cycle (TCA), coupling the hydrolysis of succinyl-CoA to the synthesis of either ATP or GTP and thus represents the only step of substrate-level phosphorylation in the TCA. The beta subunit provides nucleotide specificity of the enzyme and binds the substrate succinate, while the binding sites for coenzyme A and phosphate are found in the alpha subunit. This chain is Succinate--CoA ligase [ADP-forming] subunit beta, found in Aquifex aeolicus (strain VF5).